The primary structure comprises 225 residues: Uridylate kinase (225 aa).

Position 7–11 (7–11) interacts with ATP; sequence KISGS. A UMP-binding site is contributed by G44. Residues G45 and R49 each contribute to the ATP site. UMP-binding positions include D66 and 114–120; that span reads FQPGQST. Residues Y147 and E150 each coordinate ATP.

This sequence belongs to the UMP kinase family. Homohexamer.

Its subcellular location is the cytoplasm. It carries out the reaction UMP + ATP = UDP + ADP. It functions in the pathway pyrimidine metabolism; CTP biosynthesis via de novo pathway; UDP from UMP (UMPK route): step 1/1. Its activity is regulated as follows. Inhibited by UTP. Catalyzes the reversible phosphorylation of UMP to UDP. The protein is Uridylate kinase of Aeropyrum pernix (strain ATCC 700893 / DSM 11879 / JCM 9820 / NBRC 100138 / K1).